The following is a 71-amino-acid chain: Small integral membrane protein 31 (71 aa).

A helical transmembrane segment spans residues 8-28 (LEMAFILLAFVIFSLFTLASI). A disordered region spans residues 31-71 (TPDDSNEEEEHEKKGREKKRKKSEKKKNCSEEEHRIEAVEL). Over residues 46 to 55 (REKKRKKSEK) the composition is skewed to basic residues. Residues 56–71 (KKNCSEEEHRIEAVEL) show a composition bias toward basic and acidic residues. N58 carries an N-linked (GlcNAc...) asparagine glycan.

It is found in the membrane. This Homo sapiens (Human) protein is Small integral membrane protein 31.